Reading from the N-terminus, the 308-residue chain is Ornithine carbamoyltransferase (308 aa).

Residues 51–54 (STRT), glutamine 78, arginine 102, and 129–132 (HPTQ) contribute to the carbamoyl phosphate site. L-ornithine is bound by residues asparagine 160, aspartate 224, and 228-229 (SM). Carbamoyl phosphate-binding positions include 264–265 (CL) and arginine 292.

It belongs to the aspartate/ornithine carbamoyltransferase superfamily. OTCase family.

The protein localises to the cytoplasm. It catalyses the reaction carbamoyl phosphate + L-ornithine = L-citrulline + phosphate + H(+). It participates in amino-acid biosynthesis; L-arginine biosynthesis; L-arginine from L-ornithine and carbamoyl phosphate: step 1/3. Reversibly catalyzes the transfer of the carbamoyl group from carbamoyl phosphate (CP) to the N(epsilon) atom of ornithine (ORN) to produce L-citrulline. This is Ornithine carbamoyltransferase from Caldicellulosiruptor saccharolyticus (strain ATCC 43494 / DSM 8903 / Tp8T 6331).